The primary structure comprises 507 residues: AMP phosphorylase (507 aa).

Residues G168, 194–199, and T203 each bind AMP; that span reads SRAITG. Residue D256 is the Proton donor of the active site. AMP-binding residues include S264 and K288.

The protein belongs to the thymidine/pyrimidine-nucleoside phosphorylase family. Type 2 subfamily.

The enzyme catalyses AMP + phosphate = alpha-D-ribose 1,5-bisphosphate + adenine. It carries out the reaction CMP + phosphate = cytosine + alpha-D-ribose 1,5-bisphosphate. It catalyses the reaction UMP + phosphate = alpha-D-ribose 1,5-bisphosphate + uracil. In terms of biological role, catalyzes the conversion of AMP and phosphate to adenine and ribose 1,5-bisphosphate (R15P). Exhibits phosphorylase activity toward CMP and UMP in addition to AMP. Functions in an archaeal AMP degradation pathway, together with R15P isomerase and RubisCO. The polypeptide is AMP phosphorylase (Methanosarcina mazei (strain ATCC BAA-159 / DSM 3647 / Goe1 / Go1 / JCM 11833 / OCM 88) (Methanosarcina frisia)).